The sequence spans 630 residues: Zinc finger protein 37 homolog (630 aa).

Disordered regions lie at residues 1 to 45 (MSVS…SAAE), 77 to 172 (KPDM…PSKK), and 193 to 285 (HSRN…KHEK). Over residues 14-30 (ETVDRRRSAETTKEAGR) the composition is skewed to basic and acidic residues. One can recognise a KRAB domain in the interval 32–103 (LEMAVSEPEA…KGKRPSQGCP (72 aa)). S42 is subject to Phosphoserine. Positions 110–122 (KQKETDGKVQKDD) are enriched in basic and acidic residues. Basic residues predominate over residues 161–172 (NNLHKKHVPSKK). Over residues 193–206 (HSRNCVKRKSDAAK) the composition is skewed to basic and acidic residues. A compositionally biased stretch (basic residues) spans 221 to 231 (KGKKQTGKKHE). 2 stretches are compositionally biased toward basic and acidic residues: residues 232-243 (KLSSHSSSDKCN) and 260-274 (IKQD…HEKS). C2H2-type zinc fingers lie at residues 293–315 (YECN…QRVH) and 321–343 (YECN…QRTH). The segment at 349-367 (YECIQCGKAHGHKHALTDH) adopts a C2H2-type 3; atypical zinc-finger fold. 9 consecutive C2H2-type zinc fingers follow at residues 377 to 399 (YECA…VRSH), 405 to 427 (YECK…VRTH), 433 to 455 (YECN…MRIH), 461 to 483 (FECN…QRTH), 489 to 511 (YKCN…MRTH), 517 to 539 (FECN…QRVH), 545 to 567 (YECN…QRTH), 573 to 595 (YECN…QRSH), and 601 to 623 (YECN…VKTH).

This sequence belongs to the krueppel C2H2-type zinc-finger protein family. As to expression, expressed at low level in several tissues including fetal cartilage.

It localises to the nucleus. May be involved in transcriptional regulation. The chain is Zinc finger protein 37 homolog (ZFP37) from Homo sapiens (Human).